The primary structure comprises 284 residues: Nucleotide-binding protein Sbal195_0713 (284 aa).

Residue 8 to 15 (GRSGSGKS) participates in ATP binding. GTP is bound at residue 56–59 (DVRN).

This sequence belongs to the RapZ-like family.

Functionally, displays ATPase and GTPase activities. This chain is Nucleotide-binding protein Sbal195_0713, found in Shewanella baltica (strain OS195).